Here is a 932-residue protein sequence, read N- to C-terminus: Protein translocase subunit SecA (932 aa).

Residues Q87, 105 to 109, and D515 each bind ATP; that span reads GEGKT. C916, C918, C927, and H928 together coordinate Zn(2+).

This sequence belongs to the SecA family. As to quaternary structure, monomer and homodimer. Part of the essential Sec protein translocation apparatus which comprises SecA, SecYEG and auxiliary proteins SecDF-YajC and YidC. Requires Zn(2+) as cofactor.

It is found in the cell inner membrane. It localises to the cytoplasm. The enzyme catalyses ATP + H2O + cellular proteinSide 1 = ADP + phosphate + cellular proteinSide 2.. Its function is as follows. Part of the Sec protein translocase complex. Interacts with the SecYEG preprotein conducting channel. Has a central role in coupling the hydrolysis of ATP to the transfer of proteins into and across the cell membrane, serving both as a receptor for the preprotein-SecB complex and as an ATP-driven molecular motor driving the stepwise translocation of polypeptide chains across the membrane. The polypeptide is Protein translocase subunit SecA (Burkholderia orbicola (strain MC0-3)).